Here is a 275-residue protein sequence, read N- to C-terminus: 6-deoxy-6-sulfo-D-fructose transketolase subunit SqwG (275 aa).

The protein belongs to the transketolase family. As to quaternary structure, forms a complex with SqwH. Thiamine diphosphate is required as a cofactor.

The catalysed reaction is 6-deoxy-6-sulfo-D-fructose + D-glyceraldehyde 3-phosphate = 4-deoxy-4-sulfo-D-erythrose + D-xylulose 5-phosphate. The enzyme catalyses 4-deoxy-4-sulfo-D-erythrulose + D-glyceraldehyde 3-phosphate = sulfoacetaldehyde + D-xylulose 5-phosphate. In terms of biological role, part of the sulfo-TK pathway, a D-sulfoquinovose degradation pathway that produces 2-hydroxyethane-1-sulfonate (isethionate). Catalyzes two steps of the pathway: the formation of 4-deoxy-4-sulfoerythrose (SE) and xylulose 5-phosphate from 6-deoxy-6-sulfo-D-fructose (SF) and glyceraldehyde 3-phosphate, and the formation of sulfoacetaldehyde (SA) and xylulose 5-phosphate from 4-deoxy-4-sulfo-D-erythrulose (SEu) and glyceraldehyde 3-phosphate. The protein is 6-deoxy-6-sulfo-D-fructose transketolase subunit SqwG of Clostridium sp. (strain MSTE9).